Consider the following 380-residue polypeptide: Cytochrome b (380 aa).

A run of 4 helical transmembrane segments spans residues Tyr-34 to Met-54, Trp-78 to Ile-99, Trp-114 to Leu-134, and Phe-179 to Leu-199. Heme b contacts are provided by His-84 and His-98. Residues His-183 and His-197 each coordinate heme b. His-202 is a binding site for a ubiquinone. 4 helical membrane-spanning segments follow: residues Tyr-227 to Asn-247, Leu-289 to His-309, Leu-321 to Gly-341, and Phe-348 to Pro-368.

This sequence belongs to the cytochrome b family. The cytochrome bc1 complex contains 3 respiratory subunits (MT-CYB, CYC1 and UQCRFS1), 2 core proteins (UQCRC1 and UQCRC2) and probably 6 low-molecular weight proteins. Requires heme b as cofactor.

The protein localises to the mitochondrion inner membrane. Its function is as follows. Component of the ubiquinol-cytochrome c reductase complex (complex III or cytochrome b-c1 complex) that is part of the mitochondrial respiratory chain. The b-c1 complex mediates electron transfer from ubiquinol to cytochrome c. Contributes to the generation of a proton gradient across the mitochondrial membrane that is then used for ATP synthesis. This chain is Cytochrome b (mt-cyb), found in Typhlonectes natans (Rubber eel).